Consider the following 234-residue polypeptide: uncharacterized protein (234 aa).

The interval 62–99 is disordered; the sequence is NEESISDLNSDNPGNSEPSDVESFVLSDEDENSEKDFS. Residues 67 to 79 show a composition bias toward polar residues; that stretch reads SDLNSDNPGNSEP.

This is an uncharacterized protein from Acanthamoeba polyphaga (Amoeba).